The primary structure comprises 119 residues: Autophagy-related protein 8C-like (119 aa).

Glycine 117 carries the Phosphatidylethanolamine amidated glycine lipid modification. Residues 118–119 (SF) constitute a propeptide, removed in mature form.

This sequence belongs to the ATG8 family. In terms of assembly, interacts with ATG4. Interacts with the Phytophtora infestans effector PexRD54. Interacts with JOKA2. In terms of processing, the C-terminal 2 residues are removed by ATG4 to expose Gly-117 at the C-terminus. The C-terminal Gly is then amidated with phosphatidylethanolamine by an activating system similar to that for ubiquitin. The phosphatidylethanolamine amidated glycine is required for autophagosome formation.

It is found in the cytoplasmic vesicle. The protein resides in the autophagosome membrane. It localises to the vacuole membrane. The protein localises to the cytoplasm. Its subcellular location is the cytoskeleton. Functionally, ubiquitin-like modifier involved in autophagosomes formation. May mediate the delivery of the autophagosomes to the vacuole via the microtubule cytoskeleton. ATG8CL-mediated selective autophagy contributes to defense against the fungal pathogen Phytophtora infestans. The protein is Autophagy-related protein 8C-like of Solanum tuberosum (Potato).